The following is a 300-amino-acid chain: Ribosomal RNA small subunit methyltransferase H (300 aa).

S-adenosyl-L-methionine is bound by residues 35 to 37, aspartate 55, phenylalanine 82, aspartate 100, and glutamine 107; that span reads GGH.

The protein belongs to the methyltransferase superfamily. RsmH family.

It is found in the cytoplasm. It carries out the reaction cytidine(1402) in 16S rRNA + S-adenosyl-L-methionine = N(4)-methylcytidine(1402) in 16S rRNA + S-adenosyl-L-homocysteine + H(+). In terms of biological role, specifically methylates the N4 position of cytidine in position 1402 (C1402) of 16S rRNA. The chain is Ribosomal RNA small subunit methyltransferase H from Chlamydia trachomatis serovar A (strain ATCC VR-571B / DSM 19440 / HAR-13).